A 513-amino-acid polypeptide reads, in one-letter code: GMP synthase [glutamine-hydrolyzing] (513 aa).

In terms of domain architecture, Glutamine amidotransferase type-1 spans 3 to 192; the sequence is TVVVLDYGSQ…VSKVAKMEKN (190 aa). Cys80 acts as the Nucleophile in catalysis. Active-site residues include His166 and Glu168. The 196-residue stretch at 193 to 388 folds into the GMPS ATP-PPase domain; it reads WKMTDFIEEK…LGLPDEMINR (196 aa). Position 220-226 (220-226) interacts with ATP; that stretch reads SGGVDSS.

Homodimer.

It carries out the reaction XMP + L-glutamine + ATP + H2O = GMP + L-glutamate + AMP + diphosphate + 2 H(+). It functions in the pathway purine metabolism; GMP biosynthesis; GMP from XMP (L-Gln route): step 1/1. Catalyzes the synthesis of GMP from XMP. This is GMP synthase [glutamine-hydrolyzing] from Thermosipho africanus (strain TCF52B).